We begin with the raw amino-acid sequence, 1305 residues long: Cyclin-G-associated kinase (1305 aa).

Residue S2 is modified to N-acetylserine. A phosphoserine mark is found at S2 and S16. Residues 40–315 (LRVRRVLAEG…IAEVVRQLQE (276 aa)) enclose the Protein kinase domain. D173 acts as the Proton acceptor in catalysis. The tract at residues 332-354 (LEQNGGYGNSGPSRAQPPSGGPV) is disordered. The region spanning 397 to 564 (SVANYAKGDL…EYVCDMVAEE (168 aa)) is the Phosphatase tensin-type domain. A Phosphoserine modification is found at S454. Positions 570–708 (SKPMLVKSVV…FQVNLEVEVE (139 aa)) constitute a C2 tensin-type domain. Positions 747 to 856 (FGKPELPRQP…TPRLAAGTRQ (110 aa)) are disordered. A Phosphoserine modification is found at S768. T774 carries the post-translational modification Phosphothreonine. The segment covering 776–789 (SDSPQSSSTDTNHF) has biased composition (polar residues). S781 is subject to Phosphoserine. T792 bears the Phosphothreonine mark. Residues 805–817 (VDNTSPKESQSNL) are compositionally biased toward polar residues. A phosphoserine mark is found at S809, S824, and S827. Acidic residues predominate over residues 822-832 (DGSEVSDEEEA). Over residues 836-848 (SEERKPGAGEDTP) the composition is skewed to basic and acidic residues. Residue S938 is modified to Phosphoserine. Residues 1044–1141 (LPGPASMPVP…PQAKPAPRAS (98 aa)) are disordered. Polar residues predominate over residues 1105–1131 (VGTSATTHKSNSSWQTTRPTAPGTSWP). R1122 bears the Omega-N-methylarginine mark. The residue at position 1171 (S1171) is a Phosphoserine. Residues 1241-1305 (SRWTPVSMAD…FENQGSRPLF (65 aa)) form the J domain.

It belongs to the protein kinase superfamily. Ser/Thr protein kinase family.

It is found in the cytoplasm. The protein localises to the perinuclear region. It localises to the golgi apparatus. The protein resides in the trans-Golgi network. Its subcellular location is the cell junction. It is found in the focal adhesion. The protein localises to the cytoplasmic vesicle. It localises to the clathrin-coated vesicle. It catalyses the reaction L-seryl-[protein] + ATP = O-phospho-L-seryl-[protein] + ADP + H(+). The catalysed reaction is L-threonyl-[protein] + ATP = O-phospho-L-threonyl-[protein] + ADP + H(+). Associates with cyclin G and CDK5. Seems to act as an auxilin homolog that is involved in the uncoating of clathrin-coated vesicles by Hsc70 in non-neuronal cells. Expression oscillates slightly during the cell cycle, peaking at G1. May play a role in clathrin-mediated endocytosis and intracellular trafficking, and in the dynamics of clathrin assembly/disassembly. This chain is Cyclin-G-associated kinase, found in Rattus norvegicus (Rat).